Reading from the N-terminus, the 144-residue chain is Protein NrdI (144 aa).

Belongs to the NrdI family.

Functionally, probably involved in ribonucleotide reductase function. The polypeptide is Protein NrdI (Streptococcus pyogenes serotype M4 (strain MGAS10750)).